Reading from the N-terminus, the 92-residue chain is Beta-2-microglobulin (92 aa).

The 90-residue stretch at 2–91 folds into the Ig-like C1-type domain; the sequence is PQIQVYTRHP…VSMKEPKTVN (90 aa). A disulfide bridge links Cys22 with Cys77.

This sequence belongs to the beta-2-microglobulin family. As to quaternary structure, heterodimer of an alpha chain and a beta chain. Beta-2-microglobulin is the beta-chain of major histocompatibility complex class I molecules.

The protein resides in the secreted. Functionally, component of the class I major histocompatibility complex (MHC). Involved in the presentation of peptide antigens to the immune system. This Mus caroli (Ryukyu mouse) protein is Beta-2-microglobulin (B2m).